Here is a 147-residue protein sequence, read N- to C-terminus: Peptide deformylase 1 (147 aa).

Fe cation-binding residues include cysteine 90 and histidine 132. Glutamate 133 is a catalytic residue. Histidine 136 provides a ligand contact to Fe cation.

The protein belongs to the polypeptide deformylase family. Requires Fe(2+) as cofactor.

It carries out the reaction N-terminal N-formyl-L-methionyl-[peptide] + H2O = N-terminal L-methionyl-[peptide] + formate. Functionally, removes the formyl group from the N-terminal Met of newly synthesized proteins. Requires at least a dipeptide for an efficient rate of reaction. N-terminal L-methionine is a prerequisite for activity but the enzyme has broad specificity at other positions. This is Peptide deformylase 1 from Clostridium perfringens (strain 13 / Type A).